Reading from the N-terminus, the 228-residue chain is Aquaporin Z (228 aa).

2 consecutive transmembrane segments (helical) span residues 1 to 21 and 23 to 43; these read MLNK…GGCG and AILA…ALAF. The NPA 1 signature appears at 63–65; that stretch reads NPA. 3 helical membrane passes run 82-102, 129-149, and 154-174; these read IPYW…LYVI, MMAG…IILG, and LAPA…IHLV. An NPA 2 motif is present at residues 184-186; that stretch reads NPA. A helical membrane pass occupies residues 205–225; the sequence is LFWVAPLVGAVIGAIIWKGLL.

It belongs to the MIP/aquaporin (TC 1.A.8) family. Homotetramer.

It is found in the cell inner membrane. The enzyme catalyses H2O(in) = H2O(out). Its function is as follows. Channel that permits osmotically driven movement of water in both directions. It is involved in the osmoregulation and in the maintenance of cell turgor during volume expansion in rapidly growing cells. It mediates rapid entry or exit of water in response to abrupt changes in osmolarity. The protein is Aquaporin Z of Brucella abortus biovar 1 (strain 9-941).